A 352-amino-acid chain; its full sequence is C-C chemokine receptor type 5 (352 aa).

At 1-30 (MDYQVSSPTYDIDYYTSEPCQKINVKQIAA) the chain is on the extracellular side. A Sulfotyrosine modification is found at tyrosine 3. Residues serine 6 and serine 7 are each glycosylated (O-linked (GalNAc...) serine). Residues tyrosine 10, tyrosine 14, and tyrosine 15 each carry the sulfotyrosine modification. 2 cysteine pairs are disulfide-bonded: cysteine 20-cysteine 269 and cysteine 101-cysteine 178. The helical transmembrane segment at 31–58 (RLLPPLYSLVFIFGFVGNILVVLILINC) threads the bilayer. The Cytoplasmic portion of the chain corresponds to 59 to 68 (KRLKSMTDIY). A helical transmembrane segment spans residues 69 to 89 (LLNLAISDLLFLLTVPFWAHY). Residues 90-102 (AAAQWDFGNTMCQ) lie on the Extracellular side of the membrane. Residues 103–124 (LLTGLYFIGFFSGIFFIILLTI) traverse the membrane as a helical segment. Topologically, residues 125 to 141 (DRYLAIVHAVFALKART) are cytoplasmic. The helical transmembrane segment at 142–166 (VTFGVVTSVITWVVAVFASLPGIIF) threads the bilayer. At 167–198 (TRSQREGLHYTCSSHFPYSQYQFWKNFQTLKI) the chain is on the extracellular side. The chain crosses the membrane as a helical span at residues 199–218 (VILGLVLPLLVMVICYSGIL). The Cytoplasmic portion of the chain corresponds to 219 to 235 (KTLLRCRNEKKRHRAVR). Residues 236 to 260 (LIFTIMIVYFLFWAPYNIVLLLNTF) traverse the membrane as a helical segment. At 261 to 277 (QEFFGLNNCSSSNRLDQ) the chain is on the extracellular side. The chain crosses the membrane as a helical span at residues 278–301 (AMQVTETLGMTHCCINPIIYAFVG). The Cytoplasmic segment spans residues 302–352 (EKFRNYLLVFFQKHIAKRFCKCCSIFQQEASERASSVYTRSTGEQEISVGL). 3 S-palmitoyl cysteine lipidation sites follow: cysteine 321, cysteine 323, and cysteine 324. Residues serine 336, serine 337, serine 342, and serine 349 each carry the phosphoserine; by BARK1 modification.

This sequence belongs to the G-protein coupled receptor 1 family. Interacts with PRAF2. Efficient ligand binding to CCL3/MIP-1alpha and CCL4/MIP-1beta requires sulfation, O-glycosylation and sialic acid modifications. Glycosylation on Ser-6 is required for efficient binding of CCL4. Interacts with GRK2. Interacts with ARRB1 and ARRB2. Interacts with CNIH4. Interacts with S100A4; this interaction stimulates T-lymphocyte chemotaxis. Post-translationally, sulfated on at least 2 of the N-terminal tyrosines. Sulfation is required for efficient binding of the chemokines, CCL3 and CCL4. In terms of processing, palmitoylation in the C-terminal is important for cell surface expression. Phosphorylation on serine residues in the C-terminal is stimulated by binding CC chemokines especially by APO-RANTES. Post-translationally, O-glycosylated, but not N-glycosylated. Ser-6 appears to be the major site even if Ser-7 may be also O-glycosylated. Also sialylated glycans present which contribute to chemokine binding. Thr-16 and Ser-17 may also be glycosylated and, if so, with small moieties such as a T-antigen.

It is found in the cell membrane. Its function is as follows. Receptor for a number of inflammatory CC-chemokines including CCL3/MIP-1-alpha, CCL4/MIP-1-beta and RANTES and subsequently transduces a signal by increasing the intracellular calcium ion level. May play a role in the control of granulocytic lineage proliferation or differentiation. Participates in T-lymphocyte migration to the infection site by acting as a chemotactic receptor. This is C-C chemokine receptor type 5 (CCR5) from Cercocebus galeritus (Tana river mangabey).